Here is a 282-residue protein sequence, read N- to C-terminus: MEPLPEPASGPRPRPHRLLLLSLLLLLLPLLPAPELGPRQARAEDTDWVRLPSKCEVCKYVAVELKSAFEETGKTKEVIDTGYGILDRKASGVKYTKSDLRLIEVTETICKRLLDYSLHKERTGSNRFAKGMSETFETLHNLVHKGVKVVMDIPYELWNETSAEVADLKKQCDVLVEEFEEVIEDWYRNHQEEDLTQFLCANHVLKGKDASCLAEQWSGKKGDTAALGGKKSKKKSGRAKGLGGGSSKQRKELGDLDGDPSPEEDEGIQKASPLTHSPPDEL.

The signal sequence occupies residues 1–33 (MEPLPEPASGPRPRPHRLLLLSLLLLLLPLLPA). Residues 53–275 (SKCEVCKYVA…EGIQKASPLT (223 aa)) form the Saposin B-type domain. 3 disulfide bridges follow: Cys-55/Cys-212, Cys-58/Cys-200, and Cys-110/Cys-172. The N-linked (GlcNAc...) asparagine glycan is linked to Asn-159. Residues 159-185 (NETSAEVADLKKQCDVLVEEFEEVIED) are a coiled coil. Residues 221–282 (KGDTAALGGK…PLTHSPPDEL (62 aa)) form a disordered region. A compositionally biased stretch (acidic residues) spans 255–266 (DLDGDPSPEEDE).

It belongs to the canopy family. In terms of assembly, interacts with HSP90B1; this interaction is disrupted in the presence of ATP. Interacts with TLR1, TLR2, TLR4 and TLR9.

Its subcellular location is the endoplasmic reticulum. In terms of biological role, toll-like receptor (TLR)-specific co-chaperone for HSP90B1. Required for proper TLR folding, except that of TLR3, and hence controls TLR exit from the endoplasmic reticulum. Consequently, required for both innate and adaptive immune responses. In Bos taurus (Bovine), this protein is Protein canopy homolog 3 (CNPY3).